An 83-amino-acid polypeptide reads, in one-letter code: U20-theraphotoxin-Cg1a 2 (83 aa).

Positions 1–21 (MQVSVLITLAVLGVMFVWTSA) are cleaved as a signal peptide. A propeptide spanning residues 22–47 (AELEERGSDQPAWLKSLERIFQSEER) is cleaved from the precursor. Intrachain disulfides connect Cys-49–Cys-63, Cys-56–Cys-68, and Cys-62–Cys-76.

The protein belongs to the neurotoxin 10 (Hwtx-1) family. 40 (Jztx-35) subfamily. Expressed by the venom gland.

Its subcellular location is the secreted. Probable ion channel inhibitor. The sequence is that of U20-theraphotoxin-Cg1a 2 from Chilobrachys guangxiensis (Chinese earth tiger tarantula).